A 424-amino-acid polypeptide reads, in one-letter code: O-methyltransferase bfoD (424 aa).

Asp-275 is a binding site for S-adenosyl-L-methionine. The Proton acceptor role is filled by His-326.

Belongs to the class I-like SAM-binding methyltransferase superfamily. Cation-independent O-methyltransferase family.

Its pathway is secondary metabolite biosynthesis. Its function is as follows. Cytochrome P450 monooxygenase; part of the gene cluster that mediates the biosynthesis of bifonsecin B, a dimeric gamma-naphthopyrone. The first step in the biosynthesis of bifonsecin B is the production of gamma-naphthopyrone precursor YWA1 by the non-reducing polyketide synthase albA, via condensation of one acetyl-CoA starter unit with 6 malonyl-CoA units. YWA1 is then methylated by bfoE at position C-6 to yield foncesin which is further methylated at position C-8 by bfoD to produce fonsecin B. A key enzyme in the biosynthetic pathway is the cytochrome P450 monooxygenase bfoB which catalyzes the oxidative dimerization of fonsecin B to bifonsecin B. Bfob also catalyzes the oxidative dimerization of rubrofusarin B into nigerone. The stereoselectivity of bfoB is influenced by the two natural monomeric substrates; homodimerization of fonsecin B yields a stereochemically pure biaryl, M-foncerine B, while rubrofusarin B yields a mixture of enantiomers M- and P-nigerone. This Aspergillus brasiliensis (strain CBS 101740 / IMI 381727 / IBT 21946) protein is O-methyltransferase bfoD.